Consider the following 353-residue polypeptide: Phospho-N-acetylmuramoyl-pentapeptide-transferase (353 aa).

Helical transmembrane passes span 13–33 (ILGYITIRAGIAFFLALFFTL), 66–86 (TPTMGGIVFIFATILASLISI), 88–108 (FSNLYAVGAVLTLIFFSIIGF), 130–150 (LILQTTFALIISIFLYTLSDF), 162–182 (PLFDMGIFAIFFWVIVIIATS), 193–213 (GLATVPSITALASFSIIIYIT), 229–249 (IGEVAIVSSALIGALSGFLWY), 256–276 (VFMGDSGSLTIGAFLGYLAII), 281–301 (ILLLLIGSIFVIETLSVILQV), and 330–350 (KIIVRFWIIATLSNVIALITL).

This sequence belongs to the glycosyltransferase 4 family. MraY subfamily. Requires Mg(2+) as cofactor.

The protein localises to the cell inner membrane. The enzyme catalyses UDP-N-acetyl-alpha-D-muramoyl-L-alanyl-gamma-D-glutamyl-meso-2,6-diaminopimeloyl-D-alanyl-D-alanine + di-trans,octa-cis-undecaprenyl phosphate = di-trans,octa-cis-undecaprenyl diphospho-N-acetyl-alpha-D-muramoyl-L-alanyl-D-glutamyl-meso-2,6-diaminopimeloyl-D-alanyl-D-alanine + UMP. The protein operates within cell wall biogenesis; peptidoglycan biosynthesis. Catalyzes the initial step of the lipid cycle reactions in the biosynthesis of the cell wall peptidoglycan: transfers peptidoglycan precursor phospho-MurNAc-pentapeptide from UDP-MurNAc-pentapeptide onto the lipid carrier undecaprenyl phosphate, yielding undecaprenyl-pyrophosphoryl-MurNAc-pentapeptide, known as lipid I. The polypeptide is Phospho-N-acetylmuramoyl-pentapeptide-transferase (Sulfurimonas denitrificans (strain ATCC 33889 / DSM 1251) (Thiomicrospira denitrificans (strain ATCC 33889 / DSM 1251))).